The following is a 130-amino-acid chain: Small ribosomal subunit protein uS11 (130 aa).

It belongs to the universal ribosomal protein uS11 family. Part of the 30S ribosomal subunit. Interacts with proteins S7 and S18. Binds to IF-3.

Its function is as follows. Located on the platform of the 30S subunit, it bridges several disparate RNA helices of the 16S rRNA. Forms part of the Shine-Dalgarno cleft in the 70S ribosome. The protein is Small ribosomal subunit protein uS11 of Shewanella halifaxensis (strain HAW-EB4).